Consider the following 398-residue polypeptide: Chalcone synthase (398 aa).

The active site involves Cys167.

The protein belongs to the thiolase-like superfamily. Chalcone/stilbene synthases family.

It catalyses the reaction (E)-4-coumaroyl-CoA + 3 malonyl-CoA + 3 H(+) = 2',4,4',6'-tetrahydroxychalcone + 3 CO2 + 4 CoA. It functions in the pathway secondary metabolite biosynthesis; flavonoid biosynthesis. In terms of biological role, the primary product of this enzyme is 4,2',4',6'-tetrahydroxychalcone (also termed naringenin-chalcone or chalcone) which can under specific conditions spontaneously isomerize into naringenin. This chain is Chalcone synthase (CHS), found in Callistephus chinensis (China aster).